The sequence spans 174 residues: CASP-like protein 4D2 (174 aa).

Topologically, residues 1 to 14 are cytoplasmic; the sequence is MAPPPPSPPPVSLK. Residues 15-35 form a helical membrane-spanning segment; sequence VSLLLLRVLTGVFLVIALIIL. The Extracellular portion of the chain corresponds to 36–60; sequence STNSVTIVSQGSALKFHFKDVYAYR. Residues 61–81 traverse the membrane as a helical segment; that stretch reads YMLSAAVIGLLYAVIQLFFTI. Residues 82-150 are Cytoplasmic-facing; sequence SEFATGMKNP…FFSRGYASAS (69 aa). Residues 151 to 171 traverse the membrane as a helical segment; the sequence is LLLFSFICLAVLSVFSSLAIA. At 172–174 the chain is on the extracellular side; that stretch reads KRN.

The protein belongs to the Casparian strip membrane proteins (CASP) family. Homodimer and heterodimers.

It is found in the cell membrane. The polypeptide is CASP-like protein 4D2 (Arabidopsis lyrata subsp. lyrata (Lyre-leaved rock-cress)).